We begin with the raw amino-acid sequence, 259 residues long: DNA utilization protein HofM (259 aa).

Its function is as follows. Required for the use of extracellular DNA as a nutrient. In Escherichia coli (strain K12), this protein is DNA utilization protein HofM (hofM).